The sequence spans 508 residues: Photosystem II CP47 reaction center protein (508 aa).

6 consecutive transmembrane segments (helical) span residues 21-36 (SVHI…WAGS), 101-115 (IVFS…IWHW), 140-156 (GIHL…FGAF), 203-218 (IAAG…FHLS), 237-252 (VLSS…AFVV), and 457-472 (SFAL…HGAR).

Belongs to the PsbB/PsbC family. PsbB subfamily. As to quaternary structure, PSII is composed of 1 copy each of membrane proteins PsbA, PsbB, PsbC, PsbD, PsbE, PsbF, PsbH, PsbI, PsbJ, PsbK, PsbL, PsbM, PsbT, PsbX, PsbY, PsbZ, Psb30/Ycf12, at least 3 peripheral proteins of the oxygen-evolving complex and a large number of cofactors. It forms dimeric complexes. Binds multiple chlorophylls. PSII binds additional chlorophylls, carotenoids and specific lipids. serves as cofactor.

It is found in the plastid. It localises to the chloroplast thylakoid membrane. Functionally, one of the components of the core complex of photosystem II (PSII). It binds chlorophyll and helps catalyze the primary light-induced photochemical processes of PSII. PSII is a light-driven water:plastoquinone oxidoreductase, using light energy to abstract electrons from H(2)O, generating O(2) and a proton gradient subsequently used for ATP formation. This is Photosystem II CP47 reaction center protein from Eucalyptus globulus subsp. globulus (Tasmanian blue gum).